The primary structure comprises 246 residues: MPAKLSVNLNAIAMLRNRRDLPWPSVTGLGRAALAAGAAGLTVHPRPDQRHIRFSDLGDIRALIDDEYPQAEFNIEGFPSEAFLDLVEKHEPEQVTLVPDDPMQATSDHGWDFMSKADFLAPIVARLKGRGMRVSLFADPDSLGYERAKAIGADHVELYTGPYGATHDDPAAAARELDRLEKAARAATALGLAVNAGHDLTVDNLPALVKRIPQLAEVSIGHGLTADALMYGIPVTVSRYITALAG.

Residues Asn-8 and Arg-19 each contribute to the 3-amino-2-oxopropyl phosphate site. Catalysis depends on His-44, which acts as the Proton acceptor. The 1-deoxy-D-xylulose 5-phosphate site is built by Arg-46 and His-51. The Proton acceptor role is filled by Glu-76. Thr-106 contributes to the 1-deoxy-D-xylulose 5-phosphate binding site. His-198 functions as the Proton donor in the catalytic mechanism. 3-amino-2-oxopropyl phosphate-binding positions include Asp-199 and 221–222; that span reads GH.

The protein belongs to the PNP synthase family. As to quaternary structure, homooctamer; tetramer of dimers.

It localises to the cytoplasm. It catalyses the reaction 3-amino-2-oxopropyl phosphate + 1-deoxy-D-xylulose 5-phosphate = pyridoxine 5'-phosphate + phosphate + 2 H2O + H(+). Its pathway is cofactor biosynthesis; pyridoxine 5'-phosphate biosynthesis; pyridoxine 5'-phosphate from D-erythrose 4-phosphate: step 5/5. In terms of biological role, catalyzes the complicated ring closure reaction between the two acyclic compounds 1-deoxy-D-xylulose-5-phosphate (DXP) and 3-amino-2-oxopropyl phosphate (1-amino-acetone-3-phosphate or AAP) to form pyridoxine 5'-phosphate (PNP) and inorganic phosphate. This is Pyridoxine 5'-phosphate synthase from Brucella suis (strain ATCC 23445 / NCTC 10510).